Here is a 130-residue protein sequence, read N- to C-terminus: Small ribosomal subunit protein uS17m (130 aa).

The protein belongs to the universal ribosomal protein uS17 family. Component of the mitochondrial ribosome small subunit (28S) which comprises a 12S rRNA and about 30 distinct proteins.

Its subcellular location is the mitochondrion. This Bos taurus (Bovine) protein is Small ribosomal subunit protein uS17m (MRPS17).